The chain runs to 173 residues: 16S rRNA aminocarboxypropyltransferase (173 aa).

S-adenosyl-L-methionine-binding residues include Thr25, Leu72, Leu96, and Ser115.

The protein belongs to the TDD superfamily. TSR3 family.

It is found in the cytoplasm. The enzyme catalyses an N(1)-methylpseudouridine in rRNA + S-adenosyl-L-methionine = N(1)-methyl-N(3)-[(3S)-3-amino-3-carboxypropyl]pseudouridine in rRNA + S-methyl-5'-thioadenosine + H(+). Its function is as follows. Aminocarboxypropyltransferase that catalyzes the aminocarboxypropyl transfer on pseudouridine corresponding to position 914 in M.jannaschii 16S rRNA. It constitutes the last step in biosynthesis of the hypermodified N1-methyl-N3-(3-amino-3-carboxypropyl) pseudouridine (m1acp3-Psi). This chain is 16S rRNA aminocarboxypropyltransferase, found in Methanococcoides burtonii (strain DSM 6242 / NBRC 107633 / OCM 468 / ACE-M).